We begin with the raw amino-acid sequence, 444 residues long: DNA repair protein RadA (444 aa).

The segment at 10–27 adopts a C4-type zinc-finger fold; sequence CQECGYKSVKWLGKCPSC. 91 to 98 contributes to the ATP binding site; the sequence is GEPGIGKS. Residues 247–251 carry the RadA KNRFG motif motif; sequence KNRFG. The lon-protease-like stretch occupies residues 345 to 444; sequence DVFVNVAGGM…HIQEAIEVLF (100 aa).

Belongs to the RecA family. RadA subfamily.

Functionally, DNA-dependent ATPase involved in processing of recombination intermediates, plays a role in repairing DNA breaks. Stimulates the branch migration of RecA-mediated strand transfer reactions, allowing the 3' invading strand to extend heteroduplex DNA faster. Binds ssDNA in the presence of ADP but not other nucleotides, has ATPase activity that is stimulated by ssDNA and various branched DNA structures, but inhibited by SSB. Does not have RecA's homology-searching function. The polypeptide is DNA repair protein RadA (Aquifex aeolicus (strain VF5)).